A 317-amino-acid polypeptide reads, in one-letter code: Aspartate carbamoyltransferase catalytic subunit (317 aa).

Carbamoyl phosphate is bound by residues R66 and T67. K94 contributes to the L-aspartate binding site. R116, H144, and Q147 together coordinate carbamoyl phosphate. L-aspartate contacts are provided by R177 and R231. Residues G272 and P273 each contribute to the carbamoyl phosphate site.

It belongs to the aspartate/ornithine carbamoyltransferase superfamily. ATCase family. Heterododecamer (2C3:3R2) of six catalytic PyrB chains organized as two trimers (C3), and six regulatory PyrI chains organized as three dimers (R2).

It catalyses the reaction carbamoyl phosphate + L-aspartate = N-carbamoyl-L-aspartate + phosphate + H(+). It participates in pyrimidine metabolism; UMP biosynthesis via de novo pathway; (S)-dihydroorotate from bicarbonate: step 2/3. In terms of biological role, catalyzes the condensation of carbamoyl phosphate and aspartate to form carbamoyl aspartate and inorganic phosphate, the committed step in the de novo pyrimidine nucleotide biosynthesis pathway. In Nitrobacter winogradskyi (strain ATCC 25391 / DSM 10237 / CIP 104748 / NCIMB 11846 / Nb-255), this protein is Aspartate carbamoyltransferase catalytic subunit.